A 333-amino-acid polypeptide reads, in one-letter code: Fructose-1,6-bisphosphatase class 1 (333 aa).

Residues Glu92, Asp113, Leu115, and Asp116 each contribute to the Mg(2+) site. Residues 116–119, Asn209, Tyr242, and Lys272 contribute to the substrate site; that span reads DGSS. Glu278 contributes to the Mg(2+) binding site.

This sequence belongs to the FBPase class 1 family. Homotetramer. The cofactor is Mg(2+).

It localises to the cytoplasm. The catalysed reaction is beta-D-fructose 1,6-bisphosphate + H2O = beta-D-fructose 6-phosphate + phosphate. Its pathway is carbohydrate biosynthesis; Calvin cycle. The polypeptide is Fructose-1,6-bisphosphatase class 1 (Chlorobium luteolum (strain DSM 273 / BCRC 81028 / 2530) (Pelodictyon luteolum)).